Here is a 221-residue protein sequence, read N- to C-terminus: Phosphoenolpyruvate guanylyltransferase (221 aa).

Residues threonine 154, glycine 169, and serine 172 each coordinate phosphoenolpyruvate.

This sequence belongs to the CofC family.

It carries out the reaction phosphoenolpyruvate + GTP + H(+) = enolpyruvoyl-2-diphospho-5'-guanosine + diphosphate. It participates in cofactor biosynthesis; coenzyme F420 biosynthesis. In terms of biological role, guanylyltransferase that catalyzes the activation of phosphoenolpyruvate (PEP) as enolpyruvoyl-2-diphospho-5'-guanosine, via the condensation of PEP with GTP. It is involved in the biosynthesis of coenzyme F420, a hydride carrier cofactor. The polypeptide is Phosphoenolpyruvate guanylyltransferase (Mycolicibacterium smegmatis (strain ATCC 700084 / mc(2)155) (Mycobacterium smegmatis)).